Here is a 1373-residue protein sequence, read N- to C-terminus: Poly(A) RNA polymerase gld-2 homolog B (1373 aa).

A compositionally biased stretch (low complexity) spans 75–91 (NSCHSSNSSSNTSNNNN). Disordered regions lie at residues 75-155 (NSCH…QEKQ), 175-340 (SDCK…FWKT), 425-543 (PDST…QQQK), 734-770 (PQQQQQQQLSSHPIPTGTSSHPPPPPPPHMFFHFADG), 802-866 (CGSG…ALGS), and 880-928 (HPLH…PTPV). The span at 96-112 (GQQQQPLHYCNSNNSHS) shows a compositional bias: polar residues. Low complexity-rich tracts occupy residues 130-152 (QQQQQPSSFFQRQQQQHQMQMQQ), 180-219 (SDSNNNSTSSSNNNSTISSNNNNTSSASNNNTGSSSSCSN), 228-251 (NENSSSSSSSNNNNISCRNNNTSS), and 274-284 (ESGSSEGAAES). 2 stretches are compositionally biased toward polar residues: residues 295–340 (CNSN…FWKT) and 430–442 (KSSSNTGGSNMIR). Over residues 443-485 (SSSNGNSNFSRHQYGHQSTGSGYQQQQQRYRNAQNVYQQYQHQ) the composition is skewed to low complexity. A compositionally biased stretch (basic residues) spans 486–502 (QQHHAQQHTHPHFRRKH). 2 stretches are compositionally biased toward low complexity: residues 735–753 (QQQQQQQLSSHPIPTGTSS) and 819–844 (AGALRPASPALSSSSLGSESQWSGTS). Residues 855 to 866 (PSISPTPSALGS) are compositionally biased toward polar residues. Over residues 880–890 (HPLHQQHPPSH) the composition is skewed to low complexity. Residues 945–1373 (RYLAQARNIE…FAETTAAHVA (429 aa)) form a sufficent for interaction with Dcr-2 region. Residues D1029 and D1031 each coordinate Mg(2+). The PAP-associated domain occupies 1211-1272 (TLGEHLLGFF…NIEEPFDLSN (62 aa)). Residues 1320 to 1341 (LQQHQQQFEQQLHHPISGQQRS) show a composition bias toward low complexity. The interval 1320–1359 (LQQHQQQFEQQLHHPISGQQRSAGGGGDGANPVPSTLNPD) is disordered.

This sequence belongs to the DNA polymerase type-B-like family. GLD2 subfamily. In terms of assembly, interacts with orb, an RNA-binding protein, generating an ovarian cytoplasmic polyadenylation complex. Interacts (via C-terminus) with Dcr-2. Mg(2+) is required as a cofactor. The cofactor is Mn(2+). As to expression, expressed in ovaries. Not expressed in adult males.

The protein localises to the cytoplasm. The enzyme catalyses RNA(n) + ATP = RNA(n)-3'-adenine ribonucleotide + diphosphate. Functionally, cytoplasmic poly(A) RNA polymerase that adds successive AMP monomers to the 3'-end of specific maternal RNAs (bcd, Tl, and tor), forming a poly(A) tail, during late oogenesis and early embryogenesis. In contrast to the canonical nuclear poly(A) RNA polymerase, it only adds poly(A) to selected cytoplasmic mRNAs. Required for localization of mRNAs to both poles of the egg, to recruit or maintain known centrosomal proteins with two types of microtubule organizing centers (MTOCs): the central MTOC that forms between the meiosis II tandem spindles and the centrosomes of the mitotic spindle. Required at the final stage of oogenesis for meiosis I metaphase arrest and for progression beyond this stage. Functions with the RNA-binding protein Dcr-2 to promote cytoplasmic polyadenylation and translational activation of certain mRNAs such as Tl and r2d2. As a consequence, is involved in regulating Toll immune signaling and promoting resistance to fungal infection. The chain is Poly(A) RNA polymerase gld-2 homolog B (wisp) from Drosophila melanogaster (Fruit fly).